A 268-amino-acid chain; its full sequence is 4-hydroxy-tetrahydrodipicolinate reductase (268 aa).

NAD(+)-binding positions include G10–M15 and D36. Residue R37 participates in NADP(+) binding. Residues G99–T101 and S123–M126 contribute to the NAD(+) site. H156 functions as the Proton donor/acceptor in the catalytic mechanism. A (S)-2,3,4,5-tetrahydrodipicolinate-binding site is contributed by H157. K160 acts as the Proton donor in catalysis. G166 to T167 lines the (S)-2,3,4,5-tetrahydrodipicolinate pocket.

Belongs to the DapB family.

The protein localises to the cytoplasm. The catalysed reaction is (S)-2,3,4,5-tetrahydrodipicolinate + NAD(+) + H2O = (2S,4S)-4-hydroxy-2,3,4,5-tetrahydrodipicolinate + NADH + H(+). It catalyses the reaction (S)-2,3,4,5-tetrahydrodipicolinate + NADP(+) + H2O = (2S,4S)-4-hydroxy-2,3,4,5-tetrahydrodipicolinate + NADPH + H(+). It participates in amino-acid biosynthesis; L-lysine biosynthesis via DAP pathway; (S)-tetrahydrodipicolinate from L-aspartate: step 4/4. Its function is as follows. Catalyzes the conversion of 4-hydroxy-tetrahydrodipicolinate (HTPA) to tetrahydrodipicolinate. This chain is 4-hydroxy-tetrahydrodipicolinate reductase, found in Burkholderia pseudomallei (strain 1710b).